The sequence spans 249 residues: ATP synthase subunit a (249 aa).

Transmembrane regions (helical) follow at residues 30–50 (QSPL…YVGM), 86–106 (FFPF…LGLL), 115–135 (HIAV…LASI), 146–166 (FLPA…EIIS), 191–211 (VFAG…VLAI), and 218–238 (IALT…FAIL).

The protein belongs to the ATPase A chain family. As to quaternary structure, F-type ATPases have 2 components, CF(1) - the catalytic core - and CF(0) - the membrane proton channel. CF(1) has five subunits: alpha(3), beta(3), gamma(1), delta(1), epsilon(1). CF(0) has three main subunits: a(1), b(2) and c(9-12). The alpha and beta chains form an alternating ring which encloses part of the gamma chain. CF(1) is attached to CF(0) by a central stalk formed by the gamma and epsilon chains, while a peripheral stalk is formed by the delta and b chains.

It is found in the cell inner membrane. Its function is as follows. Key component of the proton channel; it plays a direct role in the translocation of protons across the membrane. This chain is ATP synthase subunit a, found in Gluconobacter oxydans (strain 621H) (Gluconobacter suboxydans).